The chain runs to 872 residues: Alanine--tRNA ligase (872 aa).

The Zn(2+) site is built by His567, His571, Cys669, and His673.

The protein belongs to the class-II aminoacyl-tRNA synthetase family. It depends on Zn(2+) as a cofactor.

Its subcellular location is the cytoplasm. It carries out the reaction tRNA(Ala) + L-alanine + ATP = L-alanyl-tRNA(Ala) + AMP + diphosphate. Functionally, catalyzes the attachment of alanine to tRNA(Ala) in a two-step reaction: alanine is first activated by ATP to form Ala-AMP and then transferred to the acceptor end of tRNA(Ala). Also edits incorrectly charged Ser-tRNA(Ala) and Gly-tRNA(Ala) via its editing domain. The sequence is that of Alanine--tRNA ligase from Streptococcus mutans serotype c (strain ATCC 700610 / UA159).